We begin with the raw amino-acid sequence, 421 residues long: Probable indole-3-pyruvate monooxygenase YUCCA9 (421 aa).

29–34 (GAGPSG) contributes to the FAD binding site. An NADP(+)-binding site is contributed by 196 to 201 (GCGNSG).

The protein belongs to the FMO family. It depends on FAD as a cofactor.

It carries out the reaction indole-3-pyruvate + NADPH + O2 + H(+) = (indol-3-yl)acetate + CO2 + NADP(+) + H2O. The protein operates within plant hormone metabolism; auxin biosynthesis. In terms of biological role, involved in auxin biosynthesis. Belongs to the set of redundant YUCCA genes probably responsible for auxin biosynthesis in roots. This is Probable indole-3-pyruvate monooxygenase YUCCA9 (YUC9) from Arabidopsis thaliana (Mouse-ear cress).